We begin with the raw amino-acid sequence, 165 residues long: Protein SprT (165 aa).

A SprT-like domain is found at 22-163; it reads LAQANLKLDR…RCVHCGEPLV (142 aa). Residue histidine 78 participates in Zn(2+) binding. Glutamate 79 is a catalytic residue. Residue histidine 82 participates in Zn(2+) binding.

Belongs to the SprT family. It depends on Zn(2+) as a cofactor.

Its subcellular location is the cytoplasm. This is Protein SprT from Salmonella paratyphi A (strain ATCC 9150 / SARB42).